The primary structure comprises 225 residues: Ribonuclease 3 (225 aa).

The RNase III domain occupies 5-127 (IEKLTRQLGY…IIGAVYLDSD (123 aa)). Residue glutamate 40 coordinates Mg(2+). The active site involves aspartate 44. Mg(2+) contacts are provided by aspartate 113 and glutamate 116. Glutamate 116 is an active-site residue. Residues 154 to 224 (DPKTRLQEFL…AELALEQLTN (71 aa)) form the DRBM domain.

Belongs to the ribonuclease III family. Homodimer. Requires Mg(2+) as cofactor.

The protein localises to the cytoplasm. The enzyme catalyses Endonucleolytic cleavage to 5'-phosphomonoester.. Functionally, digests double-stranded RNA. Involved in the processing of primary rRNA transcript to yield the immediate precursors to the large and small rRNAs (23S and 16S). Processes some mRNAs, and tRNAs when they are encoded in the rRNA operon. Processes pre-crRNA and tracrRNA of type II CRISPR loci if present in the organism. This chain is Ribonuclease 3, found in Vibrio vulnificus (strain CMCP6).